We begin with the raw amino-acid sequence, 213 residues long: rRNA N(6)-adenosine-methyltransferase Mettl5 (213 aa).

S-adenosyl-L-methionine contacts are provided by residues glutamine 28, threonine 31, glycine 59, cysteine 62, and 108-109; that span reads DV.

The protein belongs to the methyltransferase superfamily. PrmA family. As to quaternary structure, heterodimer; heterodimerizes with Trmt112. Enriched in the brain.

It localises to the cytoplasm. The enzyme catalyses adenosine in rRNA + S-adenosyl-L-methionine = N(6)-methyladenosine in rRNA + S-adenosyl-L-homocysteine + H(+). Functionally, catalytic subunit of a heterodimer with Trmt112, which specifically methylates the 6th position of adenine in 18S rRNA. The chain is rRNA N(6)-adenosine-methyltransferase Mettl5 from Drosophila melanogaster (Fruit fly).